Consider the following 286-residue polypeptide: Homoserine kinase (286 aa).

78–88 (PLARGLGSSSS) lines the ATP pocket.

Belongs to the GHMP kinase family. Homoserine kinase subfamily.

It is found in the cytoplasm. It carries out the reaction L-homoserine + ATP = O-phospho-L-homoserine + ADP + H(+). Its pathway is amino-acid biosynthesis; L-threonine biosynthesis; L-threonine from L-aspartate: step 4/5. In terms of biological role, catalyzes the ATP-dependent phosphorylation of L-homoserine to L-homoserine phosphate. The protein is Homoserine kinase of Streptococcus suis (strain 98HAH33).